The following is a 117-amino-acid chain: MSWRGRSTYYWPRPRRYVQPPEVIGPMRPEQFSDEVEPATPEEGEPATQRQDPAAAQEGEDEGASAGQGPKPEADSQEQGHPQTGCECEDGPDGQEVDPPNPEEVKTPEEGEKQSQC.

The interval 1-117 is disordered; sequence MSWRGRSTYY…PEEGEKQSQC (117 aa). Composition is skewed to acidic residues over residues 32-45 and 87-96; these read FSDEVEPATPEEGE and ECEDGPDGQE. The span at 103 to 117 shows a compositional bias: basic and acidic residues; it reads EEVKTPEEGEKQSQC.

This sequence belongs to the GAGE family. Expressed in a variety of tumor tissues but not in normal tissues, except testis.

The polypeptide is G antigen 6 (GAGE6) (Homo sapiens (Human)).